A 215-amino-acid chain; its full sequence is Large ribosomal subunit protein uL4c (215 aa).

A disordered region spans residues 51-87 (QKQGTVSTKTRSEVRGGGKKPWRQKGTGRARAGSSRS). Basic residues predominate over residues 67–78 (GGKKPWRQKGTG).

The protein belongs to the universal ribosomal protein uL4 family. Part of the 50S ribosomal subunit.

Its subcellular location is the plastid. The protein localises to the chloroplast. Probably binds the 23S rRNA. This is Large ribosomal subunit protein uL4c (rpl4) from Thalassiosira pseudonana (Marine diatom).